A 397-amino-acid chain; its full sequence is Tryptophan synthase beta chain (397 aa).

K87 carries the N6-(pyridoxal phosphate)lysine modification.

The protein belongs to the TrpB family. As to quaternary structure, tetramer of two alpha and two beta chains. Pyridoxal 5'-phosphate is required as a cofactor.

The catalysed reaction is (1S,2R)-1-C-(indol-3-yl)glycerol 3-phosphate + L-serine = D-glyceraldehyde 3-phosphate + L-tryptophan + H2O. It functions in the pathway amino-acid biosynthesis; L-tryptophan biosynthesis; L-tryptophan from chorismate: step 5/5. The beta subunit is responsible for the synthesis of L-tryptophan from indole and L-serine. In Escherichia coli O45:K1 (strain S88 / ExPEC), this protein is Tryptophan synthase beta chain.